We begin with the raw amino-acid sequence, 405 residues long: Tryptophan synthase beta chain (405 aa).

Residue lysine 98 is modified to N6-(pyridoxal phosphate)lysine.

It belongs to the TrpB family. As to quaternary structure, tetramer of two alpha and two beta chains. Pyridoxal 5'-phosphate is required as a cofactor.

The enzyme catalyses (1S,2R)-1-C-(indol-3-yl)glycerol 3-phosphate + L-serine = D-glyceraldehyde 3-phosphate + L-tryptophan + H2O. The protein operates within amino-acid biosynthesis; L-tryptophan biosynthesis; L-tryptophan from chorismate: step 5/5. Its function is as follows. The beta subunit is responsible for the synthesis of L-tryptophan from indole and L-serine. In Stenotrophomonas maltophilia (strain R551-3), this protein is Tryptophan synthase beta chain.